The primary structure comprises 112 residues: Putative pterin-4-alpha-carbinolamine dehydratase (112 aa).

The protein belongs to the pterin-4-alpha-carbinolamine dehydratase family.

The enzyme catalyses (4aS,6R)-4a-hydroxy-L-erythro-5,6,7,8-tetrahydrobiopterin = (6R)-L-erythro-6,7-dihydrobiopterin + H2O. The polypeptide is Putative pterin-4-alpha-carbinolamine dehydratase (Shewanella baltica (strain OS155 / ATCC BAA-1091)).